A 364-amino-acid chain; its full sequence is Fructose-bisphosphate aldolase A (364 aa).

Residue Tyr-5 is modified to Phosphotyrosine. Residue Thr-9 is modified to Phosphothreonine. A phosphoserine mark is found at Ser-36 and Ser-39. Lys-42 is modified (N6-acetyllysine; alternate). Lys-42 is covalently cross-linked (Glycyl lysine isopeptide (Lys-Gly) (interchain with G-Cter in SUMO1); alternate). Residue Lys-42 forms a Glycyl lysine isopeptide (Lys-Gly) (interchain with G-Cter in SUMO2); alternate linkage. Arg-43 contacts beta-D-fructose 1,6-bisphosphate. Ser-46 is modified (phosphoserine). An N6-(2-hydroxyisobutyryl)lysine modification is found at Lys-99. Lys-108 is subject to N6-acetyllysine. Lys-111 carries the post-translational modification N6-acetyllysine; alternate. Position 111 is an N6-malonyllysine; alternate (Lys-111). Ser-132 carries the post-translational modification Phosphoserine. Position 147 is an N6-(2-hydroxyisobutyryl)lysine (Lys-147). Glu-188 (proton acceptor) is an active-site residue. The Schiff-base intermediate with dihydroxyacetone-P role is filled by Lys-230. Ser-272 bears the Phosphoserine mark. Beta-D-fructose 1,6-bisphosphate-binding positions include 272–274 (SGG), Ser-301, and Arg-304. Position 312 is an N6-malonyllysine (Lys-312). The residue at position 330 (Lys-330) is an N6-acetyllysine.

It belongs to the class I fructose-bisphosphate aldolase family. In terms of assembly, homotetramer. Interacts with SNX9 and WAS. Interacts with FBP2; the interaction blocks FBP2 inhibition by physiological concentrations of AMP and reduces inhibition by Ca(2+). In terms of tissue distribution, expressed in muscle, brain and hepatoma cells.

It is found in the cytoplasm. The protein localises to the myofibril. It localises to the sarcomere. Its subcellular location is the i band. The protein resides in the m line. The catalysed reaction is beta-D-fructose 1,6-bisphosphate = D-glyceraldehyde 3-phosphate + dihydroxyacetone phosphate. It participates in carbohydrate degradation; glycolysis; D-glyceraldehyde 3-phosphate and glycerone phosphate from D-glucose: step 4/4. In terms of biological role, catalyzes the reversible conversion of beta-D-fructose 1,6-bisphosphate (FBP) into two triose phosphate and plays a key role in glycolysis and gluconeogenesis. In addition, may also function as scaffolding protein. This Rattus norvegicus (Rat) protein is Fructose-bisphosphate aldolase A (Aldoa).